A 147-amino-acid chain; its full sequence is D-aminoacyl-tRNA deacylase (147 aa).

Positions 136–137 (GP) match the Gly-cisPro motif, important for rejection of L-amino acids motif.

It belongs to the DTD family. In terms of assembly, homodimer.

Its subcellular location is the cytoplasm. It carries out the reaction glycyl-tRNA(Ala) + H2O = tRNA(Ala) + glycine + H(+). The enzyme catalyses a D-aminoacyl-tRNA + H2O = a tRNA + a D-alpha-amino acid + H(+). Its function is as follows. An aminoacyl-tRNA editing enzyme that deacylates mischarged D-aminoacyl-tRNAs. Also deacylates mischarged glycyl-tRNA(Ala), protecting cells against glycine mischarging by AlaRS. Acts via tRNA-based rather than protein-based catalysis; rejects L-amino acids rather than detecting D-amino acids in the active site. By recycling D-aminoacyl-tRNA to D-amino acids and free tRNA molecules, this enzyme counteracts the toxicity associated with the formation of D-aminoacyl-tRNA entities in vivo and helps enforce protein L-homochirality. The sequence is that of D-aminoacyl-tRNA deacylase from Streptococcus agalactiae serotype Ia (strain ATCC 27591 / A909 / CDC SS700).